Here is a 164-residue protein sequence, read N- to C-terminus: Phosphopantetheine adenylyltransferase (164 aa).

Residue serine 10 participates in substrate binding. ATP contacts are provided by residues 10 to 11 and histidine 18; that span reads SF. Residues lysine 42, leucine 74, and arginine 88 each contribute to the substrate site. ATP-binding positions include 89–91, glutamate 99, and 124–130; these read GLR and YAFLSSS.

Belongs to the bacterial CoaD family. As to quaternary structure, homohexamer. The cofactor is Mg(2+).

The protein localises to the cytoplasm. It catalyses the reaction (R)-4'-phosphopantetheine + ATP + H(+) = 3'-dephospho-CoA + diphosphate. Its pathway is cofactor biosynthesis; coenzyme A biosynthesis; CoA from (R)-pantothenate: step 4/5. In terms of biological role, reversibly transfers an adenylyl group from ATP to 4'-phosphopantetheine, yielding dephospho-CoA (dPCoA) and pyrophosphate. The protein is Phosphopantetheine adenylyltransferase of Geobacillus thermodenitrificans (strain NG80-2).